Reading from the N-terminus, the 509-residue chain is ATP synthase subunit alpha (509 aa).

Residue G171–T178 participates in ATP binding.

It belongs to the ATPase alpha/beta chains family. In terms of assembly, F-type ATPases have 2 components, CF(1) - the catalytic core - and CF(0) - the membrane proton channel. CF(1) has five subunits: alpha(3), beta(3), gamma(1), delta(1), epsilon(1). CF(0) has three main subunits: a(1), b(2) and c(9-12). The alpha and beta chains form an alternating ring which encloses part of the gamma chain. CF(1) is attached to CF(0) by a central stalk formed by the gamma and epsilon chains, while a peripheral stalk is formed by the delta and b chains.

The protein localises to the cell inner membrane. The catalysed reaction is ATP + H2O + 4 H(+)(in) = ADP + phosphate + 5 H(+)(out). Its function is as follows. Produces ATP from ADP in the presence of a proton gradient across the membrane. The alpha chain is a regulatory subunit. This is ATP synthase subunit alpha from Neorickettsia sennetsu (strain ATCC VR-367 / Miyayama) (Ehrlichia sennetsu).